The following is a 77-amino-acid chain: Acyl carrier protein (77 aa).

Residues 2–77 form the Carrier domain; it reads SNIEERVRNI…SAIDYVVNNG (76 aa). S37 is subject to O-(pantetheine 4'-phosphoryl)serine.

Belongs to the acyl carrier protein (ACP) family. In terms of processing, 4'-phosphopantetheine is transferred from CoA to a specific serine of apo-ACP by AcpS. This modification is essential for activity because fatty acids are bound in thioester linkage to the sulfhydryl of the prosthetic group.

The protein localises to the cytoplasm. The protein operates within lipid metabolism; fatty acid biosynthesis. Its function is as follows. Carrier of the growing fatty acid chain in fatty acid biosynthesis. In Psychromonas ingrahamii (strain DSM 17664 / CCUG 51855 / 37), this protein is Acyl carrier protein.